A 475-amino-acid chain; its full sequence is Sulfate adenylyltransferase subunit 1 (475 aa).

One can recognise a tr-type G domain in the interval 25–240 (KSLLRFLTCG…VLETVEVINL (216 aa)). The G1 stretch occupies residues 34–41 (GSVDDGKS). 34 to 41 (GSVDDGKS) is a binding site for GTP. Residues 92 to 96 (GITID) are G2. A G3 region spans residues 113 to 116 (DTPG). GTP-binding positions include 113–117 (DTPGH) and 168–171 (NKMD). The segment at 168–171 (NKMD) is G4. The tract at residues 206–208 (SAL) is G5.

It belongs to the TRAFAC class translation factor GTPase superfamily. Classic translation factor GTPase family. CysN/NodQ subfamily. In terms of assembly, heterodimer composed of CysD, the smaller subunit, and CysN.

It catalyses the reaction sulfate + ATP + H(+) = adenosine 5'-phosphosulfate + diphosphate. It functions in the pathway sulfur metabolism; hydrogen sulfide biosynthesis; sulfite from sulfate: step 1/3. Its function is as follows. With CysD forms the ATP sulfurylase (ATPS) that catalyzes the adenylation of sulfate producing adenosine 5'-phosphosulfate (APS) and diphosphate, the first enzymatic step in sulfur assimilation pathway. APS synthesis involves the formation of a high-energy phosphoric-sulfuric acid anhydride bond driven by GTP hydrolysis by CysN coupled to ATP hydrolysis by CysD. This chain is Sulfate adenylyltransferase subunit 1, found in Sodalis glossinidius (strain morsitans).